A 426-amino-acid chain; its full sequence is Tyrosine--tRNA ligase (426 aa).

An L-tyrosine-binding site is contributed by tyrosine 38. Residues 43–52 (PTADSLHIGS) carry the 'HIGH' region motif. Tyrosine 176 and glutamine 180 together coordinate L-tyrosine. A 'KMSKS' region motif is present at residues 236–240 (KFGKT). Lysine 239 is an ATP binding site. Residues 359-426 (QTIVEVLTQS…KKLFNLYIWK (68 aa)) form the S4 RNA-binding domain.

It belongs to the class-I aminoacyl-tRNA synthetase family. TyrS type 1 subfamily. Homodimer.

It localises to the cytoplasm. The enzyme catalyses tRNA(Tyr) + L-tyrosine + ATP = L-tyrosyl-tRNA(Tyr) + AMP + diphosphate + H(+). In terms of biological role, catalyzes the attachment of tyrosine to tRNA(Tyr) in a two-step reaction: tyrosine is first activated by ATP to form Tyr-AMP and then transferred to the acceptor end of tRNA(Tyr). This chain is Tyrosine--tRNA ligase, found in Aliivibrio salmonicida (strain LFI1238) (Vibrio salmonicida (strain LFI1238)).